The sequence spans 366 residues: Homoserine O-acetyltransferase (366 aa).

An AB hydrolase-1 domain is found at 47–349 (NAILICHALS…SGEGHDSFLL (303 aa)). The Nucleophile role is filled by serine 153. Residue arginine 221 participates in substrate binding. Residues aspartate 311 and histidine 344 contribute to the active site. Aspartate 345 provides a ligand contact to substrate.

Belongs to the AB hydrolase superfamily. MetX family. Homodimer.

The protein localises to the cytoplasm. The catalysed reaction is L-homoserine + acetyl-CoA = O-acetyl-L-homoserine + CoA. Its pathway is amino-acid biosynthesis; L-methionine biosynthesis via de novo pathway; O-acetyl-L-homoserine from L-homoserine: step 1/1. Functionally, transfers an acetyl group from acetyl-CoA to L-homoserine, forming acetyl-L-homoserine. The chain is Homoserine O-acetyltransferase from Leptospira interrogans serogroup Icterohaemorrhagiae serovar copenhageni (strain Fiocruz L1-130).